Consider the following 284-residue polypeptide: Nucleotide-binding protein VF_0384 (284 aa).

8-15 (GSSGAGKS) contributes to the ATP binding site. Residue 56 to 59 (DIRN) coordinates GTP.

It belongs to the RapZ-like family.

Functionally, displays ATPase and GTPase activities. The sequence is that of Nucleotide-binding protein VF_0384 from Aliivibrio fischeri (strain ATCC 700601 / ES114) (Vibrio fischeri).